Reading from the N-terminus, the 74-residue chain is Ubiquitin-like protein FUBI (74 aa).

It belongs to the ubiquitin family.

The protein is Ubiquitin-like protein FUBI (FAU) of Bos taurus (Bovine).